The following is a 318-amino-acid chain: uncharacterized protein (318 aa).

The protein belongs to the glycosyltransferase 2 family.

This is an uncharacterized protein from Rickettsia prowazekii (strain Madrid E).